A 226-amino-acid polypeptide reads, in one-letter code: Thiamine-phosphate synthase (226 aa).

Residues 46 to 50 (QLRDK) and asparagine 87 each bind 4-amino-2-methyl-5-(diphosphooxymethyl)pyrimidine. Mg(2+)-binding residues include aspartate 88 and aspartate 107. Residue serine 126 participates in 4-amino-2-methyl-5-(diphosphooxymethyl)pyrimidine binding. Residue 152–154 (TPT) coordinates 2-[(2R,5Z)-2-carboxy-4-methylthiazol-5(2H)-ylidene]ethyl phosphate. Lysine 155 provides a ligand contact to 4-amino-2-methyl-5-(diphosphooxymethyl)pyrimidine. Glycine 183 provides a ligand contact to 2-[(2R,5Z)-2-carboxy-4-methylthiazol-5(2H)-ylidene]ethyl phosphate.

It belongs to the thiamine-phosphate synthase family. Mg(2+) is required as a cofactor.

It catalyses the reaction 2-[(2R,5Z)-2-carboxy-4-methylthiazol-5(2H)-ylidene]ethyl phosphate + 4-amino-2-methyl-5-(diphosphooxymethyl)pyrimidine + 2 H(+) = thiamine phosphate + CO2 + diphosphate. The catalysed reaction is 2-(2-carboxy-4-methylthiazol-5-yl)ethyl phosphate + 4-amino-2-methyl-5-(diphosphooxymethyl)pyrimidine + 2 H(+) = thiamine phosphate + CO2 + diphosphate. The enzyme catalyses 4-methyl-5-(2-phosphooxyethyl)-thiazole + 4-amino-2-methyl-5-(diphosphooxymethyl)pyrimidine + H(+) = thiamine phosphate + diphosphate. Its pathway is cofactor biosynthesis; thiamine diphosphate biosynthesis; thiamine phosphate from 4-amino-2-methyl-5-diphosphomethylpyrimidine and 4-methyl-5-(2-phosphoethyl)-thiazole: step 1/1. Functionally, condenses 4-methyl-5-(beta-hydroxyethyl)thiazole monophosphate (THZ-P) and 2-methyl-4-amino-5-hydroxymethyl pyrimidine pyrophosphate (HMP-PP) to form thiamine monophosphate (TMP). The protein is Thiamine-phosphate synthase of Mycobacterium sp. (strain JLS).